A 360-amino-acid polypeptide reads, in one-letter code: Neutral protease 2 homolog SS1G_13741 (360 aa).

Asn129 is a glycosylation site (N-linked (GlcNAc...) asparagine). 2 disulfide bridges follow: Cys189-Cys261 and Cys268-Cys286. A Zn(2+)-binding site is contributed by His311. Glu312 is a catalytic residue. His315 and Asp326 together coordinate Zn(2+).

Belongs to the peptidase M35 family. It depends on Zn(2+) as a cofactor.

It localises to the secreted. It carries out the reaction Preferential cleavage of bonds with hydrophobic residues in P1'. Also 3-Asn-|-Gln-4 and 8-Gly-|-Ser-9 bonds in insulin B chain.. Its function is as follows. Secreted metalloproteinase that allows assimilation of proteinaceous substrates. Shows high activities on basic nuclear substrates such as histone and protamine. This chain is Neutral protease 2 homolog SS1G_13741, found in Sclerotinia sclerotiorum (strain ATCC 18683 / 1980 / Ss-1) (White mold).